Consider the following 728-residue polypeptide: Peroxisome biogenesis protein 5 (728 aa).

The segment at 1–58 (MAMRDLVNGGAACAVPGSSSSSNPLGALTNALLGSSSKTQERLKEIPNANRSGPRPQF) is disordered. The tract at residues 11–97 (AACAVPGSSS…FRGFRSVDQN (87 aa)) is amphipathic helix 1 (AH1). Cysteine 13 is covalently cross-linked (Glycyl cysteine thioester (Cys-Gly) (interchain with G-Cter in ubiquitin)). 3 tandem repeats follow at residues 240 to 244 (WAAEF), 257 to 261 (WVQSF), and 270 to 274 (WATEF). 3 short sequence motifs (wxxxF/Y motif) span residues 240-244 (WAAEF), 257-261 (WVQSF), and 270-274 (WATEF). Residues 288–311 (SMDMQNIAAMEQTRKLAHTLSQDG) form an amphipathic helix 3 (AH3) region. 6 tandem repeats follow at residues 348-352 (WATEY), 362-366 (WADQF), 378-382 (WADEF), 396-400 (WVNEF), 408-412 (WIDEF), and 425-429 (WANAY). Short sequence motifs (wxxxF/Y motif) lie at residues 348–352 (WATEY), 362–366 (WADQF), 378–382 (WADEF), 396–400 (WVNEF), 408–412 (WIDEF), and 425–429 (WANAY). Residues 392–417 (AEDQWVNEFSKLNVDDWIDEFAEGPV) form an amphipathic helix 4 (AH4) region. TPR repeat units lie at residues 491 to 524 (AEGWRLLGVTHAENDDDQQAIAAMMRAQEADPTN), 590 to 623 (ADVHIVLGVLYNLSREFDRAITSFQTALQLKPND), 625 to 657 (SLWNKLGATQANSVQSADAISAYQQALDLKPNY), and 658 to 691 (VRAWANMGISYANQGMYKESIPYYVRALAMNPKA).

This sequence belongs to the peroxisomal targeting signal receptor family. Interacts (via WxxxF/Y and LVxEF motifs) with PEX14; promoting translocation through the PEX13-PEX14 docking complex. Interacts with PEX7, promoting peroxisomal import of proteins containing a C-terminal PTS2-type peroxisomal targeting signal. Interacts with LACS7. Post-translationally, monoubiquitinated at Cys-13 by PEX2 during PEX5 passage through the retrotranslocation channel. Cys-13 monoubiquitination acts as a recognition signal for the PEX1-PEX6 complex and is required for PEX5 extraction and export from peroxisomes. When PEX5 recycling is compromised, polyubiquitinated by PEX10 during its passage through the retrotranslocation channel, leading to its degradation. As to expression, expressed in flowers, siliques, leaves and roots.

Its subcellular location is the cytoplasm. It localises to the cytosol. The protein resides in the peroxisome matrix. Functionally, receptor that mediates peroxisomal import of proteins containing a C-terminal PTS1-type tripeptide peroxisomal targeting signal (SKL-type). Binds to cargo proteins containing a PTS1 peroxisomal targeting signal in the cytosol, and translocates them into the peroxisome matrix by passing through the PEX13-PEX14 docking complex along with cargo proteins. PEX5 receptor is then retrotranslocated into the cytosol, leading to release of bound cargo in the peroxisome matrix, and reset for a subsequent peroxisome import cycle. In addition to promoting peroxisomal translocation of proteins containing a PTS1 peroxisomal targeting signal, mediates peroxisomal import of proteins containing a C-terminal PTS2-type peroxisomal targeting signal via its interaction with PEX7. Interaction with PEX7 only takes place when PEX7 is associated with cargo proteins containing a PTS2 peroxisomal targeting signal. PEX7 along with PTS2-containing cargo proteins are then translocated through the PEX13-PEX14 docking complex together with PEX5. Necessary for the developmental elimination of obsolete peroxisome matrix proteins. The chain is Peroxisome biogenesis protein 5 (PEX5) from Arabidopsis thaliana (Mouse-ear cress).